The primary structure comprises 311 residues: Methionyl-tRNA formyltransferase (311 aa).

112 to 115 contributes to the (6S)-5,6,7,8-tetrahydrofolate binding site; it reads SLLP.

It belongs to the Fmt family.

The catalysed reaction is L-methionyl-tRNA(fMet) + (6R)-10-formyltetrahydrofolate = N-formyl-L-methionyl-tRNA(fMet) + (6S)-5,6,7,8-tetrahydrofolate + H(+). In terms of biological role, attaches a formyl group to the free amino group of methionyl-tRNA(fMet). The formyl group appears to play a dual role in the initiator identity of N-formylmethionyl-tRNA by promoting its recognition by IF2 and preventing the misappropriation of this tRNA by the elongation apparatus. This chain is Methionyl-tRNA formyltransferase, found in Agrobacterium fabrum (strain C58 / ATCC 33970) (Agrobacterium tumefaciens (strain C58)).